The primary structure comprises 173 residues: Transcription factor E (173 aa).

The HTH TFE/IIEalpha-type domain occupies 9–92 (ADKAIFAYLH…LWELELDNMY (84 aa)).

Belongs to the TFE family. Monomer. Interaction with RNA polymerase subunits RpoF and RpoE is necessary for Tfe stimulatory transcription activity. Able to interact with Tbp and RNA polymerase in the absence of DNA promoter. Interacts both with the preinitiation and elongation complexes.

In terms of biological role, transcription factor that plays a role in the activation of archaeal genes transcribed by RNA polymerase. Facilitates transcription initiation by enhancing TATA-box recognition by TATA-box-binding protein (Tbp), and transcription factor B (Tfb) and RNA polymerase recruitment. Not absolutely required for transcription in vitro, but particularly important in cases where Tbp or Tfb function is not optimal. It dynamically alters the nucleic acid-binding properties of RNA polymerases by stabilizing the initiation complex and destabilizing elongation complexes. Seems to translocate with the RNA polymerase following initiation and acts by binding to the non template strand of the transcription bubble in elongation complexes. This chain is Transcription factor E, found in Methanospirillum hungatei JF-1 (strain ATCC 27890 / DSM 864 / NBRC 100397 / JF-1).